The sequence spans 124 residues: UPF0482 protein YpsIP31758_1865 (124 aa).

Positions 1–32 are cleaved as a signal peptide; the sequence is MMKINNLPRLIRTFLPATLLMLPLVWQTPALA. Residues 47-68 are disordered; the sequence is GGNNDPMSKEQARQSQQQWDET.

It belongs to the UPF0482 family.

The polypeptide is UPF0482 protein YpsIP31758_1865 (Yersinia pseudotuberculosis serotype O:1b (strain IP 31758)).